The following is a 218-amino-acid chain: Pyridoxine/pyridoxamine 5'-phosphate oxidase (218 aa).

Residues 14–17 and lysine 72 each bind substrate; that span reads RREY. Residues 67 to 72, 82 to 83, arginine 88, lysine 89, and glutamine 111 contribute to the FMN site; these read RIVLLK and YT. 3 residues coordinate substrate: tyrosine 129, arginine 133, and serine 137. FMN-binding positions include 146 to 147 and tryptophan 191; that span reads QS. 197-199 is a substrate binding site; the sequence is RLH. Arginine 201 provides a ligand contact to FMN.

It belongs to the pyridoxamine 5'-phosphate oxidase family. In terms of assembly, homodimer. FMN is required as a cofactor.

The enzyme catalyses pyridoxamine 5'-phosphate + O2 + H2O = pyridoxal 5'-phosphate + H2O2 + NH4(+). It carries out the reaction pyridoxine 5'-phosphate + O2 = pyridoxal 5'-phosphate + H2O2. The protein operates within cofactor metabolism; pyridoxal 5'-phosphate salvage; pyridoxal 5'-phosphate from pyridoxamine 5'-phosphate: step 1/1. Its pathway is cofactor metabolism; pyridoxal 5'-phosphate salvage; pyridoxal 5'-phosphate from pyridoxine 5'-phosphate: step 1/1. Functionally, catalyzes the oxidation of either pyridoxine 5'-phosphate (PNP) or pyridoxamine 5'-phosphate (PMP) into pyridoxal 5'-phosphate (PLP). This is Pyridoxine/pyridoxamine 5'-phosphate oxidase from Escherichia coli O7:K1 (strain IAI39 / ExPEC).